A 146-amino-acid polypeptide reads, in one-letter code: MRIALFRSLGLFVLVFAIDQAIKALILGGFRWESEALSITLAFNKGVAFSMFAFLEGWLKYIQLGMLGGILLFLAYDRSFFVAHYLPLSILLAAGFSNILDRFIHGGVVDYVYWHYGFEFAIFNFADVMIDVAVALFLWQTFFKQK.

The next 3 helical transmembrane spans lie at 10-30 (GLFV…LGGF), 54-74 (FLEG…LLFL), and 80-100 (FFVA…SNIL). Residues D110 and D127 contribute to the active site. The chain crosses the membrane as a helical span at residues 118–138 (FEFAIFNFADVMIDVAVALFL).

Belongs to the peptidase A8 family.

It localises to the cell inner membrane. It catalyses the reaction Release of signal peptides from bacterial membrane prolipoproteins. Hydrolyzes -Xaa-Yaa-Zaa-|-(S,diacylglyceryl)Cys-, in which Xaa is hydrophobic (preferably Leu), and Yaa (Ala or Ser) and Zaa (Gly or Ala) have small, neutral side chains.. It functions in the pathway protein modification; lipoprotein biosynthesis (signal peptide cleavage). In terms of biological role, this protein specifically catalyzes the removal of signal peptides from prolipoproteins. The chain is Lipoprotein signal peptidase from Wolinella succinogenes (strain ATCC 29543 / DSM 1740 / CCUG 13145 / JCM 31913 / LMG 7466 / NCTC 11488 / FDC 602W) (Vibrio succinogenes).